The chain runs to 336 residues: Tetraacyldisaccharide 4'-kinase (336 aa).

60-67 contributes to the ATP binding site; it reads TVGGTGKT.

This sequence belongs to the LpxK family.

The catalysed reaction is a lipid A disaccharide + ATP = a lipid IVA + ADP + H(+). The protein operates within glycolipid biosynthesis; lipid IV(A) biosynthesis; lipid IV(A) from (3R)-3-hydroxytetradecanoyl-[acyl-carrier-protein] and UDP-N-acetyl-alpha-D-glucosamine: step 6/6. Transfers the gamma-phosphate of ATP to the 4'-position of a tetraacyldisaccharide 1-phosphate intermediate (termed DS-1-P) to form tetraacyldisaccharide 1,4'-bis-phosphate (lipid IVA). This chain is Tetraacyldisaccharide 4'-kinase, found in Pseudomonas fluorescens (strain ATCC BAA-477 / NRRL B-23932 / Pf-5).